A 120-amino-acid chain; its full sequence is Large ribosomal subunit protein uL18 (120 aa).

The protein belongs to the universal ribosomal protein uL18 family. In terms of assembly, part of the 50S ribosomal subunit; part of the 5S rRNA/L5/L18/L25 subcomplex. Contacts the 5S and 23S rRNAs.

Functionally, this is one of the proteins that bind and probably mediate the attachment of the 5S RNA into the large ribosomal subunit, where it forms part of the central protuberance. In Rhizobium etli (strain ATCC 51251 / DSM 11541 / JCM 21823 / NBRC 15573 / CFN 42), this protein is Large ribosomal subunit protein uL18.